The following is a 622-amino-acid chain: Protein lev-9 (622 aa).

Residues 1–16 (MRFLLLLAISITYASA) form the signal peptide. A WAP; atypical domain is found at 17-61 (LSCPEVTLSQRPKHCKKECIADEDCKRNKRCMCDGECGLSCVNPI). 19 disulfide bridges follow: cysteine 19–cysteine 49, cysteine 35–cysteine 47, cysteine 41–cysteine 57, cysteine 64–cysteine 105, cysteine 91–cysteine 118, cysteine 124–cysteine 171, cysteine 154–cysteine 188, cysteine 193–cysteine 233, cysteine 219–cysteine 246, cysteine 251–cysteine 291, cysteine 277–cysteine 304, cysteine 309–cysteine 349, cysteine 335–cysteine 362, cysteine 366–cysteine 409, cysteine 395–cysteine 420, cysteine 425–cysteine 467, cysteine 452–cysteine 481, cysteine 486–cysteine 543, and cysteine 529–cysteine 556. 8 Sushi domains span residues 62-120 (AMCH…VCRL), 122-190 (LKCG…RCKA), 191-248 (RACP…NCKA), 249-306 (TECS…RCEE), 307-364 (IRCS…RCLA), 365-422 (SCRV…VCSP), 423-483 (LSCH…KCLP), and 484-558 (SWCE…KCVS). Asparagine 411 carries an N-linked (GlcNAc...) asparagine glycan. A propeptide spanning residues 576–622 (SLPGRAVREYVDDELSTHRQHSGKCGIVSGKLERMIMQHSDNGVSVC) is cleaved from the precursor.

Post-translationally, proteolytic processing of the C-terminus is required for clustering activity but not for secretion nor traffic.

It localises to the synapse. The protein resides in the secreted. Its function is as follows. Scaffolding protein that is necessary to cluster acetylcholine receptors at neuromuscular junctions. The protein is Protein lev-9 (lev-9) of Caenorhabditis elegans.